The sequence spans 165 residues: Pro-MCH (165 aa).

The signal sequence occupies residues 1–21 (MAKMNLSSYILILTFSLFSQG). I143 carries the post-translational modification Isoleucine amide. A disulfide bridge links C153 with C162.

It belongs to the melanin-concentrating hormone family. Post-translationally, differentially processed in the brain and in peripheral organs producing two neuropeptides; NEI and MCH. A third peptide, NGE, may also be produced. Preferential processing in neurons by prohormone convertase 2 (PC2) generates NEI. MCH is generated in neurons of the lateral hypothalmic area by several prohormone convertases including PC1/3, PC2 and PC5/6. In terms of tissue distribution, predominantly expressed in lateral hypothalamus, also detected in pallidum, neocortex and cerebellum. Also found in thymus, brown adipose tissue, duodenum and testis (spermatogonia, early spermatocytes and Sertoli cells). No expression in peripheral blood. In brain exclusively mature MCH and NEI peptides are present. In peripheral tissues a large product, encompassing the NEI and MCH domains of the precursor, is found predominantly.

The protein resides in the secreted. In terms of biological role, MCH may act as a neurotransmitter or neuromodulator in a broad array of neuronal functions directed toward the regulation of goal-directed behavior, such as food intake, and general arousal. May also have a role in spermatocyte differentiation. This Homo sapiens (Human) protein is Pro-MCH (PMCH).